The sequence spans 309 residues: MPKVRTKDLIEQFQLELVSGEEGIHRPIDTSDLSRPGIEMAGFFTYYPADRVQLLGKTELTFFDTLTTEQKQERMKALCTEETPCIIVTRNQDVPDELLQASRESGVPLLRSAQTTTRLSSRLTNYLEGKLAPTTAVHGVLVDIYGVGVLITGQSGVGKSETALELVKRGHRLVADDSVEIRQEDEDTLVGSSPDLIEHLLEIRGLGIINVMTLFGAGAVRNYKRITLVINLEIWDQKKNYDRLGLDEEKMKIIDTELTKITLPVRPGRNLAVIIEVAAMNFRLKRMGVNAAQQFSERLMSAIELGNQE.

Catalysis depends on residues histidine 138 and lysine 159. Residue 153-160 participates in ATP binding; the sequence is GQSGVGKS. Position 160 (serine 160) interacts with Mg(2+). The Proton acceptor; for phosphorylation activity. Proton donor; for dephosphorylation activity role is filled by aspartate 177. The important for the catalytic mechanism of both phosphorylation and dephosphorylation stretch occupies residues 201–210; sequence LEIRGLGIIN. Position 202 (glutamate 202) interacts with Mg(2+). Arginine 243 is an active-site residue. Positions 264–269 are important for the catalytic mechanism of dephosphorylation; it reads PVRPGR.

Belongs to the HPrK/P family. In terms of assembly, homohexamer. Mg(2+) serves as cofactor.

It catalyses the reaction [HPr protein]-L-serine + ATP = [HPr protein]-O-phospho-L-serine + ADP + H(+). The catalysed reaction is [HPr protein]-O-phospho-L-serine + phosphate + H(+) = [HPr protein]-L-serine + diphosphate. Functionally, catalyzes the ATP- as well as the pyrophosphate-dependent phosphorylation of a specific serine residue in HPr, a phosphocarrier protein of the phosphoenolpyruvate-dependent sugar phosphotransferase system (PTS). HprK/P also catalyzes the pyrophosphate-producing, inorganic phosphate-dependent dephosphorylation (phosphorolysis) of seryl-phosphorylated HPr (P-Ser-HPr). The two antagonistic activities of HprK/P are regulated by several intracellular metabolites, which change their concentration in response to the absence or presence of rapidly metabolisable carbon sources (glucose, fructose, etc.) in the growth medium. Also phosphorylates/dephosphorylates the HPr-like catabolite repression protein crh on a specific serine residue. Therefore, by controlling the phosphorylation state of HPr and crh, HPrK/P is a sensor enzyme that plays a major role in the regulation of carbon metabolism and sugar transport: it mediates carbon catabolite repression (CCR), and regulates PTS-catalyzed carbohydrate uptake and inducer exclusion. The polypeptide is HPr kinase/phosphorylase (Bacillus mycoides (strain KBAB4) (Bacillus weihenstephanensis)).